The primary structure comprises 403 residues: Acetate kinase (403 aa).

Asn-8 contributes to the Mg(2+) binding site. ATP is bound at residue Lys-15. Arg-90 contributes to the substrate binding site. Catalysis depends on Asp-147, which acts as the Proton donor/acceptor. Residues 207 to 211 (HLGSG), 282 to 284 (DLR), and 330 to 334 (GVGEN) contribute to the ATP site. Mg(2+) is bound at residue Glu-384.

The protein belongs to the acetokinase family. As to quaternary structure, homodimer. It depends on Mg(2+) as a cofactor. The cofactor is Mn(2+).

It is found in the cytoplasm. It catalyses the reaction acetate + ATP = acetyl phosphate + ADP. It participates in metabolic intermediate biosynthesis; acetyl-CoA biosynthesis; acetyl-CoA from acetate: step 1/2. Its function is as follows. Catalyzes the formation of acetyl phosphate from acetate and ATP. Can also catalyze the reverse reaction. The protein is Acetate kinase of Exiguobacterium sibiricum (strain DSM 17290 / CCUG 55495 / CIP 109462 / JCM 13490 / 255-15).